Here is a 109-residue protein sequence, read N- to C-terminus: Trafficking protein particle complex subunit 2-like protein (109 aa).

Belongs to the TRAPP small subunits family. Sedlin subfamily. In terms of assembly, component of the multisubunit TRAPP (transport protein particle) complex, which includes at least TRAPPC2, TRAPPC2L, TRAPPC3, TRAPPC3L, TRAPPC4, TRAPPC5, TRAPPC8, TRAPPC9, TRAPPC10, TRAPPC11 and TRAPPC12. Interacts with the heterodimer TRAPPC3-TRAPPC6A.

The protein localises to the cytoplasm. Its subcellular location is the perinuclear region. It localises to the endoplasmic reticulum. The protein resides in the golgi apparatus. Its function is as follows. May play a role in vesicular transport from endoplasmic reticulum to Golgi. The chain is Trafficking protein particle complex subunit 2-like protein (TRAPPC2L) from Pongo abelii (Sumatran orangutan).